The sequence spans 145 residues: Hemoglobin subunit beta-A (145 aa).

The Globin domain maps to 1 to 145 (MLTAEEKAAV…VANALAHRYH (145 aa)). Residues His62 and His91 each contribute to the heme b site.

Belongs to the globin family. As to quaternary structure, heterotetramer of two alpha chains and two beta chains. Red blood cells.

In terms of biological role, involved in oxygen transport from the lung to the various peripheral tissues. This Capra hircus (Goat) protein is Hemoglobin subunit beta-A.